The sequence spans 107 residues: Ribonuclease P protein component 4 (107 aa).

Cys66, Cys69, Cys92, and Cys95 together coordinate Zn(2+).

This sequence belongs to the eukaryotic/archaeal RNase P protein component 4 family. As to quaternary structure, consists of a catalytic RNA component and at least 4-5 protein subunits. Zn(2+) is required as a cofactor.

Its subcellular location is the cytoplasm. It catalyses the reaction Endonucleolytic cleavage of RNA, removing 5'-extranucleotides from tRNA precursor.. In terms of biological role, part of ribonuclease P, a protein complex that generates mature tRNA molecules by cleaving their 5'-ends. This Methanosarcina mazei (strain ATCC BAA-159 / DSM 3647 / Goe1 / Go1 / JCM 11833 / OCM 88) (Methanosarcina frisia) protein is Ribonuclease P protein component 4.